Consider the following 1384-residue polypeptide: Hepatocyte growth factor receptor (1384 aa).

Residues 1-24 (MKAPAVLAPGILVLLFTFVQKSNG) form the signal peptide. At 25–933 (ECKEALVKSR…VIVQPDQNFT (909 aa)) the chain is on the extracellular side. Positions 27 to 516 (KEALVKSRMN…TGKKITKIPL (490 aa)) constitute a Sema domain. Residue asparagine 45 is glycosylated (N-linked (GlcNAc...) asparagine). 4 cysteine pairs are disulfide-bonded: cysteine 95–cysteine 101, cysteine 98–cysteine 160, cysteine 133–cysteine 141, and cysteine 173–cysteine 176. Asparagine 106 carries N-linked (GlcNAc...) asparagine glycosylation. Asparagine 149 carries an N-linked (GlcNAc...) asparagine glycan. Residues asparagine 203 and asparagine 359 are each glycosylated (N-linked (GlcNAc...) asparagine). 2 disulfide bridges follow: cysteine 299–cysteine 364 and cysteine 386–cysteine 398. Asparagine 400 and asparagine 406 each carry an N-linked (GlcNAc...) asparagine glycan. 4 disulfide bridges follow: cysteine 521–cysteine 539, cysteine 527–cysteine 562, cysteine 530–cysteine 546, and cysteine 542–cysteine 552. IPT/TIG domains lie at 564–656 (PTIY…FSYV), 658–740 (PIIT…FIYR), and 743–837 (PIVY…LIYV). The O-linked (Man) threonine glycan is linked to threonine 583. Asparagine 608 and asparagine 636 each carry an N-linked (GlcNAc...) asparagine glycan. O-linked (Man) threonine glycans are attached at residues threonine 677 and threonine 762. N-linked (GlcNAc...) asparagine glycans are attached at residues asparagine 786, asparagine 880, and asparagine 931. A helical membrane pass occupies residues 934–956 (GLIVGVVSVSIILLLLLGLFLWL). Residues 957 to 1384 (KKRKQIKDLG…NVSGEDDDDT (428 aa)) lie on the Cytoplasmic side of the membrane. A Phosphoserine modification is found at serine 967. A Phosphothreonine modification is found at threonine 978. Residues serine 991, serine 998, and serine 1001 each carry the phosphoserine modification. Residue tyrosine 1004 is modified to Phosphotyrosine. In terms of domain architecture, Protein kinase spans 1079–1346 (VHFNEVIGRG…RIAAIFSAFI (268 aa)). Residues 1085–1093 (IGRGHFGCV) and lysine 1111 contribute to the ATP site. The active-site Proton acceptor is aspartate 1205. An interaction with RANBP9 region spans residues 1213 to 1382 (LDEKFTVKVA…QENVSGEDDD (170 aa)). Tyrosine 1231 is subject to Phosphotyrosine. A phosphotyrosine; by autocatalysis mark is found at tyrosine 1235 and tyrosine 1236. Phosphothreonine is present on threonine 1290. Residues 1321-1360 (WHPKAELRPSFSELVSRIAAIFSAFIGEHYVHVNATYVNV) form an interaction with MUC20 region. Phosphotyrosine; by autocatalysis is present on residues tyrosine 1350 and tyrosine 1357. At tyrosine 1366 the chain carries Phosphotyrosine.

The protein belongs to the protein kinase superfamily. Tyr protein kinase family. In terms of assembly, heterodimer made of an alpha chain (50 kDa) and a beta chain (145 kDa) which are disulfide linked. Binds PLXNB1. Interacts when phosphorylated with downstream effectors including STAT3, PIK3R1, SRC, PCLG1, GRB2 and GAB1. Interacts with SPSB1, SPSB2 and SPSB4. Interacts with INPP5D/SHIP1. When phosphorylated at Tyr-1357, interacts with INPPL1/SHIP2. Interacts with RANBP9 and RANBP10, as well as SPSB1, SPSB2, SPSB3 and SPSB4. SPSB1 binding occurs in the presence and in the absence of HGF, however HGF treatment has a positive effect on this interaction. Interacts with MUC20; prevents interaction with GRB2 and suppresses hepatocyte growth factor-induced cell proliferation. Interacts with GRB10. Interacts with PTPN1 and PTPN2. Interacts with HSP90AA1 and HSP90AB1; the interaction suppresses MET kinase activity. Interacts with tensin TNS3. Interacts (when phosphorylated) with tensin TNS4 (via SH2 domain); the interaction increases MET protein stability by inhibiting MET endocytosis and subsequent lysosomal degradation. In terms of processing, autophosphorylated in response to ligand binding on Tyr-1235 and Tyr-1236 in the kinase domain leading to further phosphorylation of Tyr-1350 and Tyr-1357 in the C-terminal multifunctional docking site. Dephosphorylated by PTPRJ at Tyr-1350 and Tyr-1366. Dephosphorylated by PTPN1 and PTPN2. Post-translationally, ubiquitinated. Ubiquitination by CBL regulates the receptor stability and activity through proteasomal degradation. O-mannosylation of IPT/TIG domains by TMEM260 is required for protein maturation. O-mannosylated residues are composed of single mannose glycans that are not elongated or modified.

It is found in the membrane. It catalyses the reaction L-tyrosyl-[protein] + ATP = O-phospho-L-tyrosyl-[protein] + ADP + H(+). In its inactive state, the C-terminal tail interacts with the catalytic domain and inhibits the kinase activity. Upon ligand binding, the C-terminal tail is displaced and becomes phosphorylated, thus increasing the kinase activity. Functionally, receptor tyrosine kinase that transduces signals from the extracellular matrix into the cytoplasm by binding to hepatocyte growth factor/HGF ligand. Regulates many physiological processes including proliferation, scattering, morphogenesis and survival. Ligand binding at the cell surface induces autophosphorylation of MET on its intracellular domain that provides docking sites for downstream signaling molecules. Following activation by ligand, interacts with the PI3-kinase subunit PIK3R1, PLCG1, SRC, GRB2, STAT3 or the adapter GAB1. Recruitment of these downstream effectors by MET leads to the activation of several signaling cascades including the RAS-ERK, PI3 kinase-AKT, or PLCgamma-PKC. The RAS-ERK activation is associated with the morphogenetic effects while PI3K/AKT coordinates prosurvival effects. During embryonic development, MET signaling plays a role in gastrulation, development and migration of muscles and neuronal precursors, angiogenesis and kidney formation. In adults, participates in wound healing as well as organ regeneration and tissue remodeling. Also promotes differentiation and proliferation of hematopoietic cells. This is Hepatocyte growth factor receptor (MET) from Ovis aries (Sheep).